The sequence spans 403 residues: GPI-N-acetylgalactosamine transferase PGAP4 (403 aa).

Residues 1–22 (MTTSTSPAAMLLRRLRRLSWGS) are Cytoplasmic-facing. The chain crosses the membrane as a helical span at residues 23-43 (TAVQLFILTVVTFGLLAPLAC). Residues 44 to 264 (HRLLHSYFYL…INPEPMRILE (221 aa)) are Lumenal-facing. Position 109 (valine 109) interacts with UDP-N-acetyl-alpha-D-galactosamine. 2 disulfide bridges follow: cysteine 132-cysteine 136 and cysteine 144-cysteine 194. The DXD motif signature appears at 211–213 (EDD). A helical membrane pass occupies residues 265 to 285 (WVGVGMLLGPVLTWIYMRFAC). Topologically, residues 286–287 (RP) are cytoplasmic. Residues 288–308 (GFSWPVMLFFCLYSMGLVELV) form a helical membrane-spanning segment. Topologically, residues 309 to 403 (GRHYFLELRR…LRYNFHPSLL (95 aa)) are lumenal. Cysteine 332 and cysteine 333 are joined by a disulfide. Residues threonine 334, proline 335, and lysine 362 each contribute to the UDP-N-acetyl-alpha-D-galactosamine site.

Belongs to the PGAP4 family. Post-translationally, glycosylated.

It is found in the golgi apparatus membrane. In terms of biological role, golgi-resident glycosylphosphatidylinositol (GPI)-N-acetylgalactosamine transferase that catalyzes the N-acetyl-beta-D-galactosamine transfer from an UDP-N-acetyl-alpha-D-galactosamine to the 4-OH-position of first mannose of the glycosylphosphatidylinositol (GPI) of a GPI-anchored protein (GPI-AP). This modification occurs after the fatty acid remodeling step of the GPI-anchor maturation. The sequence is that of GPI-N-acetylgalactosamine transferase PGAP4 from Mus musculus (Mouse).